The following is a 282-amino-acid chain: Pyridoxal 5'-phosphate synthase subunit PdxS (282 aa).

Aspartate 14 lines the D-ribose 5-phosphate pocket. Catalysis depends on lysine 71, which acts as the Schiff-base intermediate with D-ribose 5-phosphate. Glycine 143 lines the D-ribose 5-phosphate pocket. Position 155 (arginine 155) interacts with D-glyceraldehyde 3-phosphate. D-ribose 5-phosphate is bound by residues glycine 204 and 225 to 226 (GS).

It belongs to the PdxS/SNZ family. In the presence of PdxT, forms a dodecamer of heterodimers.

It carries out the reaction aldehydo-D-ribose 5-phosphate + D-glyceraldehyde 3-phosphate + L-glutamine = pyridoxal 5'-phosphate + L-glutamate + phosphate + 3 H2O + H(+). Its pathway is cofactor biosynthesis; pyridoxal 5'-phosphate biosynthesis. In terms of biological role, catalyzes the formation of pyridoxal 5'-phosphate from ribose 5-phosphate (RBP), glyceraldehyde 3-phosphate (G3P) and ammonia. The ammonia is provided by the PdxT subunit. Can also use ribulose 5-phosphate and dihydroxyacetone phosphate as substrates, resulting from enzyme-catalyzed isomerization of RBP and G3P, respectively. The protein is Pyridoxal 5'-phosphate synthase subunit PdxS of Treponema denticola (strain ATCC 35405 / DSM 14222 / CIP 103919 / JCM 8153 / KCTC 15104).